Here is a 120-residue protein sequence, read N- to C-terminus: Peptidyl-tRNA hydrolase (120 aa).

Belongs to the PTH2 family.

It localises to the cytoplasm. It catalyses the reaction an N-acyl-L-alpha-aminoacyl-tRNA + H2O = an N-acyl-L-amino acid + a tRNA + H(+). The natural substrate for this enzyme may be peptidyl-tRNAs which drop off the ribosome during protein synthesis. The sequence is that of Peptidyl-tRNA hydrolase from Sulfolobus acidocaldarius (strain ATCC 33909 / DSM 639 / JCM 8929 / NBRC 15157 / NCIMB 11770).